The chain runs to 364 residues: Carbamoyl phosphate synthase pyrimidine-specific small chain (364 aa).

The tract at residues 1–169 (MKRYLVLEDG…AYPNPATGPN (169 aa)) is CPSase. Residues Ser45, Gly217, and Gly219 each coordinate L-glutamine. Positions 169–356 (NVVVVDFGLK…IDLMAANQAT (188 aa)) constitute a Glutamine amidotransferase type-1 domain. Cys244 (nucleophile) is an active-site residue. L-glutamine-binding residues include Leu245, Gln248, Asn286, Gly288, and Tyr289. Catalysis depends on residues His329 and Asp331.

Belongs to the CarA family. As to quaternary structure, composed of two chains; the small (or glutamine) chain promotes the hydrolysis of glutamine to ammonia, which is used by the large (or ammonia) chain to synthesize carbamoyl phosphate. Tetramer of heterodimers (alpha,beta)4.

The catalysed reaction is hydrogencarbonate + L-glutamine + 2 ATP + H2O = carbamoyl phosphate + L-glutamate + 2 ADP + phosphate + 2 H(+). It carries out the reaction L-glutamine + H2O = L-glutamate + NH4(+). It participates in pyrimidine metabolism; UMP biosynthesis via de novo pathway; (S)-dihydroorotate from bicarbonate: step 1/3. Inhibited by pyrimidine. In terms of biological role, small subunit of the glutamine-dependent carbamoyl phosphate synthetase (CPSase). CPSase catalyzes the formation of carbamoyl phosphate from the ammonia moiety of glutamine, carbonate, and phosphate donated by ATP, constituting the first step of the biosynthetic pathway leading to pyrimidine nucleotides. The small subunit (glutamine amidotransferase) binds and cleaves glutamine to supply the large subunit with the substrate ammonia. The protein is Carbamoyl phosphate synthase pyrimidine-specific small chain of Lactiplantibacillus plantarum (strain ATCC BAA-793 / NCIMB 8826 / WCFS1) (Lactobacillus plantarum).